We begin with the raw amino-acid sequence, 347 residues long: Nuclear distribution protein nudE-like 1 (347 aa).

A coiled-coil region spans residues 28 to 190; the sequence is QSFQEARDEL…LAVRERQQEV (163 aa). The interval 56-166 is self-association; the sequence is VQAEQRNRDL…LDEKESLLVS (111 aa). The tract at residues 64–189 is interaction with KATNB1; that stretch reads DLQADNQRLK…ELAVRERQQE (126 aa). The required for interaction with PAFAH1B1 stretch occupies residues 114–133; that stretch reads YVRELEQANDDLERAKRATI. The interval 175 to 347 is interaction with CENPF; that stretch reads RDLRQELAVR…SAPGMLPLSV (173 aa). The interval 189–256 is interaction with YWHAE; that stretch reads EVTRKSAPSS…SARISALNIV (68 aa). Residues 191 to 347 are interaction with NEFL; that stretch reads TRKSAPSSPT…SAPGMLPLSV (157 aa). Positions 195-256 are interaction with KATNA1; sequence APSSPTLDCE…SARISALNIV (62 aa). A Phosphoserine modification is found at S215. Residue T219 is modified to Phosphothreonine; by CDK1 and MAPK1. S231 is subject to Phosphoserine. Residues 241–280 are interaction with DISC1; that stretch reads TSPLTPSARISALNIVGDLLRKVGALESKLAACRNFAKDQ. Residue S242 is modified to Phosphoserine; by CDK1. Residue T245 is modified to Phosphothreonine; by CDK1 and MAPK1. The tract at residues 256 to 291 is required for localization to the centrosome and interaction with dynein, dynactin, tubulin gamma, PCM1 and PCNT; it reads VGDLLRKVGALESKLAACRNFAKDQASRKSYISGNV. Residue C273 is the site of S-palmitoyl cysteine; by ZDHHC2, ZDHHC3 and ZDHHC7 attachment. The tract at residues 314–347 is disordered; that stretch reads KGAVNGFDPAPPPPDPGLGSSRPSSAPGMLPLSV. Phosphoserine is present on S346.

This sequence belongs to the nudE family. Self-associates. Interacts with DISC1, dynein, dynactin, tubulin gamma, KATNA1, KATNB1, microtubules, PAFAH1B1, PCM1, PCNT, and YWHAE. Interacts directly with NEFL and indirectly with NEFH. Interacts (via C-terminus) with CENPF. Interacts with ZNF365. Interacts with PLEKHM1 (via N- and C-terminus). Interacts with GTP-bound RAB9A; the interaction may lead to RAB9A-dynein motor tethering. Phosphorylated in mitosis. Can be phosphorylated by CDK1, CDK5 and MAPK1. Phosphorylation by CDK5 promotes interaction with KATNA1 and YWHAE. Post-translationally, palmitoylation at Cys-273 reduces affinity for dynein.

The protein resides in the cytoplasm. It is found in the cytoskeleton. Its subcellular location is the microtubule organizing center. It localises to the centrosome. The protein localises to the chromosome. The protein resides in the centromere. It is found in the kinetochore. Its subcellular location is the spindle. Required for organization of the cellular microtubule array and microtubule anchoring at the centrosome. May regulate microtubule organization at least in part by targeting the microtubule severing protein KATNA1 to the centrosome. Also positively regulates the activity of the minus-end directed microtubule motor protein dynein. May enhance dynein-mediated microtubule sliding by targeting dynein to the microtubule plus ends. Required for several dynein- and microtubule-dependent processes such as the maintenance of Golgi integrity, the centripetal motion of secretory vesicles and the coupling of the nucleus and centrosome. Also required during brain development for the migration of newly formed neurons from the ventricular/subventricular zone toward the cortical plate. Required for mitosis in some cell types but appears to be dispensible for mitosis in cortical neuronal progenitors, which instead requires NDE1. Facilitates the polymerization of neurofilaments from the individual subunits NEFH and NEFL. Positively regulates lysosome peripheral distribution and ruffled border formation in osteoclasts. Plays a role, together with DISC1, in the regulation of neurite outgrowth. May act as a RAB9A/B effector that tethers RAB9-associated late endosomes to the dynein motor for their retrograde transport to the trans-Golgi network. This is Nuclear distribution protein nudE-like 1 (NDEL1) from Macaca fascicularis (Crab-eating macaque).